The following is a 365-amino-acid chain: DNA replication and repair protein RecF (365 aa).

30–37 is an ATP binding site; that stretch reads GNNGMGKT.

Belongs to the RecF family.

Its subcellular location is the cytoplasm. Its function is as follows. The RecF protein is involved in DNA metabolism; it is required for DNA replication and normal SOS inducibility. RecF binds preferentially to single-stranded, linear DNA. It also seems to bind ATP. The sequence is that of DNA replication and repair protein RecF from Parabacteroides distasonis (strain ATCC 8503 / DSM 20701 / CIP 104284 / JCM 5825 / NCTC 11152).